Reading from the N-terminus, the 335-residue chain is Protein MET1, chloroplastic (335 aa).

Positions 1–18 are enriched in low complexity; that stretch reads MSLAPSSYPSLYSSPSLP. 2 disordered regions span residues 1–29 and 66–88; these read MSLA…NPSL and SETE…KYET. Residues 1–73 constitute a chloroplast transit peptide; the sequence is MSLAPSSYPS…KASETESSAK (73 aa). A compositionally biased stretch (polar residues) spans 19–29; sequence RTQQTKQNPSL. Over residues 78–88 the composition is skewed to acidic residues; that stretch reads GDGEEEEKYET. The 40-residue stretch at 97-136 folds into the PDZ domain; it reads YGLKFRKGRDGGTYIDAILPGGSADKTGKFTVGDRVIATS. 3 TPR repeats span residues 217–250, 254–287, and 289–323; these read REKD…KPTP, SVAS…GYED, and KRIR…ESAI.

In terms of assembly, interacts directly with stromal loops of photosystem II (PSII) core components psbB (CP47) and psbC (CP43). Associates with PSII subcomplexes formed during the PSII repair cycle (e.g. PSII dimers, PSII monomers, CP43-less PSII monomerand PSII reaction centers). Phosphorylated rapidly (e.g. within 5 minutes) but transiently at threonine and serine residues after wounding. As to expression, expressed in leaves (at protein level). Mostly expressed in leaves, stems and siliques, and, to a lower extent, in flowers and senescent leaves, but not present in roots (at protein level).

It localises to the plastid. It is found in the chloroplast membrane. Its subcellular location is the chloroplast thylakoid membrane. Functionally, involved in photosystem II supercomplex formation and repair, probably acting as a psbB/psbC chaperone on the stromal side of the membrane. This chain is Protein MET1, chloroplastic, found in Arabidopsis thaliana (Mouse-ear cress).